A 192-amino-acid polypeptide reads, in one-letter code: Cytidylate kinase (192 aa).

An ATP-binding site is contributed by 7 to 15; the sequence is GPAGSGKST.

The protein belongs to the cytidylate kinase family. Type 2 subfamily.

Its subcellular location is the cytoplasm. The catalysed reaction is CMP + ATP = CDP + ADP. It catalyses the reaction dCMP + ATP = dCDP + ADP. The chain is Cytidylate kinase from Natronomonas pharaonis (strain ATCC 35678 / DSM 2160 / CIP 103997 / JCM 8858 / NBRC 14720 / NCIMB 2260 / Gabara) (Halobacterium pharaonis).